The sequence spans 321 residues: o-succinylbenzoate synthase (321 aa).

The Proton donor role is filled by lysine 110. Mg(2+)-binding residues include aspartate 138, glutamate 165, and aspartate 188. The active-site Proton acceptor is lysine 212.

The protein belongs to the mandelate racemase/muconate lactonizing enzyme family. MenC type 1 subfamily. A divalent metal cation serves as cofactor.

The enzyme catalyses (1R,6R)-6-hydroxy-2-succinyl-cyclohexa-2,4-diene-1-carboxylate = 2-succinylbenzoate + H2O. Its pathway is quinol/quinone metabolism; 1,4-dihydroxy-2-naphthoate biosynthesis; 1,4-dihydroxy-2-naphthoate from chorismate: step 4/7. It functions in the pathway quinol/quinone metabolism; menaquinone biosynthesis. Converts 2-succinyl-6-hydroxy-2,4-cyclohexadiene-1-carboxylate (SHCHC) to 2-succinylbenzoate (OSB). This Mycolicibacterium smegmatis (strain ATCC 700084 / mc(2)155) (Mycobacterium smegmatis) protein is o-succinylbenzoate synthase.